A 234-amino-acid chain; its full sequence is Carboxy-S-adenosyl-L-methionine synthase (234 aa).

Residues Tyr35, Gly60–Ser62, Asp83–Asn84, and Arg191 each bind S-adenosyl-L-methionine.

It belongs to the class I-like SAM-binding methyltransferase superfamily. Cx-SAM synthase family. In terms of assembly, homodimer.

It carries out the reaction prephenate + S-adenosyl-L-methionine = carboxy-S-adenosyl-L-methionine + 3-phenylpyruvate + H2O. Catalyzes the conversion of S-adenosyl-L-methionine (SAM) to carboxy-S-adenosyl-L-methionine (Cx-SAM). In Campylobacter lari (strain RM2100 / D67 / ATCC BAA-1060), this protein is Carboxy-S-adenosyl-L-methionine synthase.